Reading from the N-terminus, the 295-residue chain is Trimeric intracellular cation channel type A (295 aa).

Topologically, residues 1-18 are lumenal; the sequence is MELLSALSLDDLAASFSK. The helical transmembrane segment at 19–39 threads the bilayer; sequence LPVFPLFDVAYYIISILYLKY. At 40 to 51 the chain is on the cytoplasmic side; that stretch reads EPGAVDLSKRSP. Residues 52–72 form a helical membrane-spanning segment; sequence VASWLCAMLYCFGSYILADVL. Topologically, residues 73–84 are lumenal; it reads LGESPIHYFSNN. Position 74 (Gly74) interacts with Ca(2+). A helical transmembrane segment spans residues 85 to 105; sequence ANILLASAVWYLTFFCPLNIF. The Cytoplasmic portion of the chain corresponds to 106-144; that stretch reads YKIVSFLPVKLVLVGMKEVVRVRKIAMGIHHAHHHYHHG. The a 1,2-diacyl-sn-glycero-3-phospho-(1D-myo-inositol-4,5-bisphosphate) site is built by Lys122 and Arg126. A helical membrane pass occupies residues 145-165; it reads WVIMVLIGWVKGSGVALMSNL. Residues 166-178 are Lumenal-facing; it reads EQLLRGVWKPETN. Residues 179-199 traverse the membrane as a helical segment; sequence EILHMSFPTKASLYGAILFTL. The Cytoplasmic segment spans residues 200-201; the sequence is QQ. A helical membrane pass occupies residues 202–222; the sequence is AHWLPISKAYLIFFFTLFMAV. Residues 223–233 lie on the Lumenal side of the membrane; the sequence is CKIYMTATHSH. The chain crosses the membrane as a helical span at residues 234–254; sequence GSPFAIFESGICYVLFAAANG. Residues 255-295 lie on the Cytoplasmic side of the membrane; that stretch reads DHDDHGNHHHHHDDHDVSHSAGKSKEEHNEGTRKRKTKKAE. A disordered region spans residues 258 to 295; the sequence is DHGNHHHHHDDHDVSHSAGKSKEEHNEGTRKRKTKKAE. Residues 267–286 show a composition bias toward basic and acidic residues; it reads DDHDVSHSAGKSKEEHNEGT.

The protein belongs to the TMEM38 family. As to quaternary structure, homotrimer; conformation seems to be controled by binding to diacylglycerol (DAG).

The protein localises to the sarcoplasmic reticulum membrane. The protein resides in the nucleus membrane. The catalysed reaction is K(+)(in) = K(+)(out). With respect to regulation, channel activity is activated by a change of voltage within the sarcoplasmic reticulum lumen and blocked by luminal high Ca(2+) levels. In terms of biological role, intracellular monovalent cation channel required for maintenance of rapid intracellular calcium release. Acts as a potassium counter-ion channel that functions in synchronization with calcium release from intracellular stores. Opened by a change of voltage within the sarcoplasmic reticulum lumen. This Xenopus laevis (African clawed frog) protein is Trimeric intracellular cation channel type A (tmem38a).